A 71-amino-acid chain; its full sequence is ATP synthase subunit c (71 aa).

2 helical membrane-spanning segments follow: residues 5-25 (AIGIAAGLAAIGGAIGVAIIV) and 47-67 (FIGAPLAEAVPIIAIVIAFLL).

It belongs to the ATPase C chain family. As to quaternary structure, F-type ATPases have 2 components, F(1) - the catalytic core - and F(0) - the membrane proton channel. F(1) has five subunits: alpha(3), beta(3), gamma(1), delta(1), epsilon(1). F(0) has three main subunits: a(1), b(2) and c(10-14). The alpha and beta chains form an alternating ring which encloses part of the gamma chain. F(1) is attached to F(0) by a central stalk formed by the gamma and epsilon chains, while a peripheral stalk is formed by the delta and b chains.

Its subcellular location is the cell membrane. Its function is as follows. F(1)F(0) ATP synthase produces ATP from ADP in the presence of a proton or sodium gradient. F-type ATPases consist of two structural domains, F(1) containing the extramembraneous catalytic core and F(0) containing the membrane proton channel, linked together by a central stalk and a peripheral stalk. During catalysis, ATP synthesis in the catalytic domain of F(1) is coupled via a rotary mechanism of the central stalk subunits to proton translocation. Functionally, key component of the F(0) channel; it plays a direct role in translocation across the membrane. A homomeric c-ring of between 10-14 subunits forms the central stalk rotor element with the F(1) delta and epsilon subunits. The chain is ATP synthase subunit c from Shouchella clausii (strain KSM-K16) (Alkalihalobacillus clausii).